The chain runs to 301 residues: Fluoroquinolones export ATP-binding protein Rv2688c (301 aa).

Residues 18 to 246 form the ABC transporter domain; sequence IRVRGLTFRY…RSRRRVRVEY (229 aa). 52-59 lines the ATP pocket; it reads GPSGAGKS.

Belongs to the ABC transporter superfamily. In terms of assembly, the complex is composed of 2 ATP-binding proteins (Rv2688c) and 2 transmembrane proteins (Rv2686c and Rv2687c).

It localises to the cell membrane. Inhibited by reserpine and verapamil. Part of the ABC transporter complex Rv2686c/Rv2687c/Rv2688c involved in fluoroquinolones export. Confers resistance to ciprofloxacin and, to a lesser extent, norfloxacin, moxifloxacin and sparfloxacin. Probably responsible for energy coupling to the transport system. In Mycobacterium tuberculosis (strain ATCC 25618 / H37Rv), this protein is Fluoroquinolones export ATP-binding protein Rv2688c.